The following is a 649-amino-acid chain: MTDKQVYPVSPEVAERALVNKSQYEEMYRQSVEDPNTFWGEHGKRIDWIKPFTKVKNSTYDYNNLSIKWFEDGVLNASANCLDRHLEQRGDQTAIIFEGDDPSVSRNVTYRELYEETCKFANVLKDQGVKKGDVVTIYMPMIVETAVAMLACARIGAIHSVVFGGFSPEALAARIVNGKSRFVITADEGLRGGRAIPLKKNVDSALKHEDDAKVDKVIVVSRTGNDQVPWTEGRDLRYEDLMKNASAECQPEPMNAEDPLFMLYTSGSTGAPKGVLHTTGGYMVYASMTHQYVFDYHDGDVYWCTADFGWVTGHSYILYGPLANGAITLLFEGVPNYPDSSRMGQVVDKHKVNILYTAPTAIRALMAQGESCMDGTTRGSLKLLGSVGEPINPEAWEWYHRVIGNSKCPIVDTWWQTETGGILISPLPGAVDLKPGSATLPFFGVQPALVDNEGNILEGKTEGNLVILDSWPGQMRTIYGDHERFVQTYFSTYKGMYFTGDGARRDEDGYYWITGRVDDVLNVSGHRLGTAEVESALVAHDKVAEAAVVGYPHDIKGQGIYVYVTLVQGEEPSDELKKELVQWVRKEIGPIASPDVIQWAPGLPKTRSGKIMRRILRKIAANEHDQLGDTSTLADPGVVDELISSRAFK.

Residues 191–194 (RGGR), Thr312, and Asn336 each bind CoA. ATP is bound by residues 388–390 (GEP), 412–417 (DTWWQT), Asp501, and Arg516. Ser524 is a CoA binding site. Arg527 is an ATP binding site. Mg(2+)-binding residues include Val538, His540, and Val543. A CoA-binding site is contributed by Arg585. N6-acetyllysine is present on Lys610.

The protein belongs to the ATP-dependent AMP-binding enzyme family. It depends on Mg(2+) as a cofactor. Acetylated. Deacetylation by the SIR2-homolog deacetylase activates the enzyme.

It carries out the reaction acetate + ATP + CoA = acetyl-CoA + AMP + diphosphate. Functionally, catalyzes the conversion of acetate into acetyl-CoA (AcCoA), an essential intermediate at the junction of anabolic and catabolic pathways. AcsA undergoes a two-step reaction. In the first half reaction, AcsA combines acetate with ATP to form acetyl-adenylate (AcAMP) intermediate. In the second half reaction, it can then transfer the acetyl group from AcAMP to the sulfhydryl group of CoA, forming the product AcCoA. In Marinobacter nauticus (strain ATCC 700491 / DSM 11845 / VT8) (Marinobacter aquaeolei), this protein is Acetyl-coenzyme A synthetase.